Consider the following 402-residue polypeptide: N-acetyltransferase Eis (402 aa).

The region spanning 3–154 (VTLCSPTEDD…RFARFHADAP (152 aa)) is the N-acetyltransferase domain. Residues 85–87 (VAV), 93–98 (RRGLLR), and 121–122 (SE) each bind acetyl-CoA. Tyr-126 acts as the Proton donor in catalysis. The active-site Proton acceptor; via carboxylate is Phe-402.

It belongs to the acetyltransferase Eis family. As to quaternary structure, homohexamer; trimer of dimers.

The protein localises to the secreted. The protein resides in the host cytoplasmic vesicle. Its subcellular location is the host phagosome. It localises to the extracellular vesicle. It is found in the bacterial extracellular vesicle. The protein localises to the host extracellular space. It catalyses the reaction L-lysyl-[protein] + acetyl-CoA = N(6)-acetyl-L-lysyl-[protein] + CoA + H(+). In terms of biological role, effector that is released into the host cell and affects host immune responses. Acts as an acetyltransferase that acetylates lysine residues of host proteins. This Mycobacterium bovis (strain BCG / Pasteur 1173P2) protein is N-acetyltransferase Eis.